Consider the following 318-residue polypeptide: MALDDIHTPVLLERCLELLAPALQGEGAVLVDATLGMAGHSEAFLDALPGLRLVGLDRDPDALAIAGERLARFGDRVNLVHTVYDGIGRALDGLGIGEVQGVFFDLGVSSLQLDRVERGFSYSQDAPLDMRMDGTAGLTAAQVVAEYDELELRRIFYDYGEEKLAPRYASRIVQAREVEPITTSARLVEIIQQATPAAVQRAGHPAKRVFQALRIEVNQELSVLARAMPAAVDRLAVGGRVVVESYQSLEDRIVKRELRARSTSTAPVGLPVELPEHRPELKLLVRGAELADQHEIAQNPRAASVRLRAAERARRRHA.

Residues 38 to 40 (AGH), Asp57, Leu91, Asp105, and Gln112 each bind S-adenosyl-L-methionine.

It belongs to the methyltransferase superfamily. RsmH family.

Its subcellular location is the cytoplasm. The enzyme catalyses cytidine(1402) in 16S rRNA + S-adenosyl-L-methionine = N(4)-methylcytidine(1402) in 16S rRNA + S-adenosyl-L-homocysteine + H(+). In terms of biological role, specifically methylates the N4 position of cytidine in position 1402 (C1402) of 16S rRNA. The sequence is that of Ribosomal RNA small subunit methyltransferase H from Clavibacter michiganensis subsp. michiganensis (strain NCPPB 382).